The sequence spans 92 residues: Exodeoxyribonuclease 7 small subunit (92 aa).

Positions 71 to 84 are enriched in low complexity; it reads AESAGTAKSAVAAD. The disordered stretch occupies residues 71-92; it reads AESAGTAKSAVAADSRGAADSA.

It belongs to the XseB family. Heterooligomer composed of large and small subunits.

The protein resides in the cytoplasm. It carries out the reaction Exonucleolytic cleavage in either 5'- to 3'- or 3'- to 5'-direction to yield nucleoside 5'-phosphates.. Its function is as follows. Bidirectionally degrades single-stranded DNA into large acid-insoluble oligonucleotides, which are then degraded further into small acid-soluble oligonucleotides. This is Exodeoxyribonuclease 7 small subunit from Leifsonia xyli subsp. xyli (strain CTCB07).